Here is a 79-residue protein sequence, read N- to C-terminus: Cytochrome b (79 aa).

3 helical membrane passes run 1–7, 31–52, and 67–79; these read TAMFLAM, WLIR…YLHI, and WNVG…LTMM. Heme b contacts are provided by histidine 37 and histidine 51.

It belongs to the cytochrome b family. As to quaternary structure, the cytochrome bc1 complex contains 3 respiratory subunits (MT-CYB, CYC1 and UQCRFS1), 2 core proteins (UQCRC1 and UQCRC2) and probably 6 low-molecular weight proteins. Heme b is required as a cofactor.

The protein localises to the mitochondrion inner membrane. Functionally, component of the ubiquinol-cytochrome c reductase complex (complex III or cytochrome b-c1 complex) that is part of the mitochondrial respiratory chain. The b-c1 complex mediates electron transfer from ubiquinol to cytochrome c. Contributes to the generation of a proton gradient across the mitochondrial membrane that is then used for ATP synthesis. This Hypsophrys nicaraguensis (Moga) protein is Cytochrome b (mt-cyb).